A 528-amino-acid polypeptide reads, in one-letter code: Ecdysteroid UDP-glucosyltransferase (528 aa).

The N-terminal stretch at 1 to 32 (MGHLHIVHWRLTMNGAIAALFLCLVMVHQQHA) is a signal peptide.

The protein belongs to the UDP-glycosyltransferase family.

Functionally, catalyzes the transfer of glucose from UDP-glucose to ecdysteroids which are insect molting hormones. Expression of egt interferes with normal insect development and block molting. The polypeptide is Ecdysteroid UDP-glucosyltransferase (EGT) (Mamestra brassicae nuclear polyhedrosis virus (MbNPV)).